We begin with the raw amino-acid sequence, 431 residues long: Na(+)-translocating NADH-quinone reductase subunit F (431 aa).

The helical transmembrane segment at 10-30 (IFVASAAFCSLGLILVAVILL) threads the bilayer. In terms of domain architecture, 2Fe-2S ferredoxin-type spans 41-133 (CKLKINNDDS…DLCLEVEERY (93 aa)). Cys-76, Cys-82, Cys-85, and Cys-117 together coordinate [2Fe-2S] cluster. The FAD-binding FR-type domain maps to 136 to 286 (ASSWEGTVVS…SGPYGESFMK (151 aa)).

The protein belongs to the NqrF family. Composed of six subunits; NqrA, NqrB, NqrC, NqrD, NqrE and NqrF. Requires [2Fe-2S] cluster as cofactor. FAD serves as cofactor.

It is found in the cell inner membrane. It carries out the reaction a ubiquinone + n Na(+)(in) + NADH + H(+) = a ubiquinol + n Na(+)(out) + NAD(+). Functionally, NQR complex catalyzes the reduction of ubiquinone-1 to ubiquinol by two successive reactions, coupled with the transport of Na(+) ions from the cytoplasm to the periplasm. The first step is catalyzed by NqrF, which accepts electrons from NADH and reduces ubiquinone-1 to ubisemiquinone by a one-electron transfer pathway. The protein is Na(+)-translocating NADH-quinone reductase subunit F of Chlamydia trachomatis serovar A (strain ATCC VR-571B / DSM 19440 / HAR-13).